A 126-amino-acid polypeptide reads, in one-letter code: Large ribosomal subunit protein uL22 (126 aa).

The protein belongs to the universal ribosomal protein uL22 family. Part of the 50S ribosomal subunit.

Functionally, this protein binds specifically to 23S rRNA; its binding is stimulated by other ribosomal proteins, e.g. L4, L17, and L20. It is important during the early stages of 50S assembly. It makes multiple contacts with different domains of the 23S rRNA in the assembled 50S subunit and ribosome. Its function is as follows. The globular domain of the protein is located near the polypeptide exit tunnel on the outside of the subunit, while an extended beta-hairpin is found that lines the wall of the exit tunnel in the center of the 70S ribosome. The protein is Large ribosomal subunit protein uL22 of Prochlorococcus marinus (strain NATL2A).